The chain runs to 109 residues: Nascent polypeptide-associated complex protein (109 aa).

An NAC-A/B domain is found at 3–70; that stretch reads PMNPKQMKKM…YEVVKRPPKI (68 aa).

It belongs to the NAC-alpha family. Homodimer. Interacts with the ribosome. Binds ribosomal RNA.

In terms of biological role, contacts the emerging nascent chain on the ribosome. The sequence is that of Nascent polypeptide-associated complex protein from Archaeoglobus fulgidus (strain ATCC 49558 / DSM 4304 / JCM 9628 / NBRC 100126 / VC-16).